We begin with the raw amino-acid sequence, 892 residues long: Dystroglycan 1 (892 aa).

The N-terminal stretch at 1–27 (MRMSAGLSLLLPLWGRTFLLLLSVAMA) is a signal peptide. Residues 28–750 (QSHWPSEAGR…SSEDDVYLHT (723 aa)) lie on the Extracellular side of the membrane. Residues 30 to 405 (HWPSEAGRDW…GQIRPTMTIP (376 aa)) are required for laminin recognition. Residues 46–68 (SMHSVLSDLHEAVPTVVGIPDGI) are O-glycosylated at one site. N138 is a glycosylation site (N-linked (GlcNAc...) asparagine). C179 and C261 form a disulfide bridge. Residues 313 to 482 (ATPTPVTAIG…PPTRIRTTTS (170 aa)) are mucin-like domain. O-linked (Man6P...) threonine glycosylation is found at T314, T316, and T376. Residues 378–497 (TLGPIQPTRV…GEPNQRPELK (120 aa)) form a disordered region. Residues 410-444 (PTAVATPPTTTTKKPRVSTPKPATPSTDSSTTTTR) show a composition bias toward low complexity. The tract at residues 460 to 482 (TTKAPITRLETASPPTRIRTTTS) is O-glycosylated at seven sites with GalNAc. The region spanning 600–709 (RAPARFKAKF…SSIAVTGSGS (110 aa)) is the Peptidase S72 domain. N638, N646, and N658 each carry an N-linked (GlcNAc...) asparagine glycan. Cysteines 666 and 710 form a disulfide. A disordered region spans residues 721–742 (PRRVPSEVPSTDVPDRDPEKSS). The segment covering 733 to 742 (VPDRDPEKSS) has biased composition (basic and acidic residues). A helical membrane pass occupies residues 751 to 771 (VIPAVVVAAILLIAGIIAMIC). At 772 to 892 (YRKKRKGKLT…YRSPPPYVPP (121 aa)) the chain is on the cytoplasmic side. The short motif at 773–779 (RKKRKGK) is the Nuclear localization signal element. T787 bears the Phosphothreonine mark. The tract at residues 816–892 (LQEEKAPLPP…YRSPPPYVPP (77 aa)) is required for interaction with CAV3. Residues 820-892 (KAPLPPPEYP…YRSPPPYVPP (73 aa)) are disordered. The span at 829–843 (PNQSVPETTPLNQDT) shows a compositional bias: polar residues. The segment covering 856–867 (NAPPYQPPPPFT) has biased composition (pro residues). The required for binding DMD and UTRN stretch occupies residues 877 to 892 (PKNMTPYRSPPPYVPP). Positions 886–889 (PPPY) match the PPXY motif motif. Y889 carries the phosphotyrosine; by SRC modification.

As to quaternary structure, monomer. Heterodimer of alpha- and beta-dystroglycan subunits which are the central components of the dystrophin-glycoprotein complex. This complex then can form a dystrophin-associated glycoprotein complex (DGC) which is composed of three subcomplexes: a cytoplasmic complex comprised of DMD (or UTRN), DTNA and a number of syntrophins, such as SNTB1, SNTB2, SNTG1 and SNTG2, the transmembrane dystroglycan complex, and the sarcoglycan-sarcospan complex. Interacts (via the N-terminal of alphaDAG1) with LARGE1; the interaction enhances laminin binding. Interacts with SGCD. Interacts with AGR2 and AGR3. Interacts (betaDAG1) with DMD; the interaction is inhibited by phosphorylation on the PPXY motif. Interacts (betaDAG1, via its PPXY motif) with UTRN (via its WWW and ZZ domains); the interaction is inhibited by phosphorylation on the PPXY motif. Interacts (betaDAG1, via its phosphorylated PPXY motif) with the SH2 domain-containing proteins, FYN, CSK, NCK and SHC. Interacts (betaDAG1) with CAV3 (via a central WW-like domain); the interaction disrupts the binding of DMD. BetaDAG1 directly interacts with ANK3, but not with ANK2; this interaction does not interfere with DMD-binding and is required for retention at costameres. Identified in a dystroglycan complex that contains at least PRX, DRP2, UTRN, DMD and DAG1. Interacts with POMGNT1. BetaDAG1 interacts with CD93. O-glycosylated. POMGNT1 catalyzes the initial addition of N-acetylglucosamine, giving rise to the GlcNAc(beta1-2)Man(alpha1-)O-Ser/Thr moiety and thus providing the necessary basis for the addition of further carbohydrate moieties. Heavily O-glycosylated comprising of up to two thirds of its mass and the carbohydrate composition differs depending on tissue type. Mucin-type O-glycosylation is important for ligand binding activity. O-mannosylation is found in high abundance in both brain and muscle where the most abundant glycan is Sia-alpha-2-3-Gal-beta-1-4-Glc-NAc-beta-1-2-Man. In muscle, glycosylation on Thr-314, Thr-316 and Thr-376 by a phosphorylated O-mannosyl glycan with the structure 2-(N-acetylamido)-2-deoxygalactosyl-beta-1,3-2-(N-acetylamido)-2-deoxyglucosyl-beta-1,4-6-phosphomannose is mediated by like-acetylglucosaminyltransferase (LARGE1) protein amd is required for laminin binding. O-glycosylated in the N-terminal region with a core 1 or possibly core 8 glycan. The brain form displays a unique glycosylation pattern which is absent in other tissues; this form shows enhanced binding to laminin LAMA5 compared to the skeletal muscle form. In terms of processing, N-glycosylated. Post-translationally, autolytic cleavage produces the alpha and beta subunits. In cutaneous cells, as well as in certain pathological conditions, shedding of beta-dystroglycan can occur releasing a peptide of about 30 kDa. SRC-mediated phosphorylation of the PPXY motif of the beta subunit recruits SH2 domain-containing proteins, but inhibits binding to WWW domain-containing proteins, DMD and UTRN. This phosphorylation also inhibits nuclear entry.

The protein localises to the secreted. It is found in the extracellular space. It localises to the cell membrane. The protein resides in the cytoplasm. Its subcellular location is the cytoskeleton. The protein localises to the nucleus. It is found in the nucleoplasm. It localises to the sarcolemma. The protein resides in the postsynaptic cell membrane. The dystroglycan complex is involved in a number of processes including laminin and basement membrane assembly, sarcolemmal stability, cell survival, peripheral nerve myelination, nodal structure, cell migration, and epithelial polarization. Functionally, extracellular peripheral glycoprotein that acts as a receptor for extracellular matrix proteins containing laminin-G domains. Receptor for laminin-2 (LAMA2) and agrin in peripheral nerve Schwann cells. Also acts as a receptor for laminin LAMA5. In terms of biological role, transmembrane protein that plays important roles in connecting the extracellular matrix to the cytoskeleton. Acts as a cell adhesion receptor in both muscle and non-muscle tissues. Receptor for both DMD and UTRN and, through these interactions, scaffolds axin to the cytoskeleton. Also functions in cell adhesion-mediated signaling and implicated in cell polarity. This is Dystroglycan 1 from Canis lupus familiaris (Dog).